Consider the following 678-residue polypeptide: DNA ligase (678 aa).

Residues 34 to 38 (DSEYD), 83 to 84 (SL), and Glu-114 each bind NAD(+). Lys-116 serves as the catalytic N6-AMP-lysine intermediate. Arg-137, Glu-176, Lys-293, and Lys-317 together coordinate NAD(+). Zn(2+) contacts are provided by Cys-411, Cys-414, Cys-429, and Cys-435. The region spanning 594–678 (PTRQPLNGES…LMAGYGQTLS (85 aa)) is the BRCT domain.

This sequence belongs to the NAD-dependent DNA ligase family. LigA subfamily. It depends on Mg(2+) as a cofactor. Requires Mn(2+) as cofactor.

It carries out the reaction NAD(+) + (deoxyribonucleotide)n-3'-hydroxyl + 5'-phospho-(deoxyribonucleotide)m = (deoxyribonucleotide)n+m + AMP + beta-nicotinamide D-nucleotide.. Its function is as follows. DNA ligase that catalyzes the formation of phosphodiester linkages between 5'-phosphoryl and 3'-hydroxyl groups in double-stranded DNA using NAD as a coenzyme and as the energy source for the reaction. It is essential for DNA replication and repair of damaged DNA. In Acinetobacter baumannii (strain SDF), this protein is DNA ligase.